We begin with the raw amino-acid sequence, 134 residues long: MSWQTYVDDHLMCDIEGHEGHRLTAAAIVGHDGSVWAQSATFPQFKPEEMNGIMTDFNEPGHLAPTGLHLGGTKYMVIQGEAGAVIRGKKGSGGITIKKTGQALVFGIYEEPVTPGQCNMVVERLGDYLLEQGL.

Cysteine 13 and cysteine 118 are oxidised to a cystine. An Involved in PIP2 interaction motif is present at residues alanine 84 to threonine 100. Phosphothreonine is present on threonine 114.

This sequence belongs to the profilin family. As to quaternary structure, occurs in many kinds of cells as a complex with monomeric actin in a 1:1 ratio. In terms of processing, phosphorylated by MAP kinases.

The protein localises to the cytoplasm. It localises to the cytoskeleton. Binds to actin and affects the structure of the cytoskeleton. At high concentrations, profilin prevents the polymerization of actin, whereas it enhances it at low concentrations. The polypeptide is Profilin-3 (Olea europaea (Common olive)).